The sequence spans 1824 residues: Vacuolar membrane-associated protein iml1 (1824 aa).

Residues 28–41 (SLALSQTDGQSDKP) are compositionally biased toward polar residues. Disordered stretches follow at residues 28–48 (SLALSQTDGQSDKPSTPDERT), 644–682 (RATSSTLGSSPGSLVPPKATFRRNSPFRHQLSDSLRPEP), and 719–964 (PFRK…KALA). A compositionally biased stretch (low complexity) spans 646–659 (TSSTLGSSPGSLVP). Residues 720–733 (FRKRRHRRKPSKIK) show a composition bias toward basic residues. The span at 734-762 (RPSEPEVKASNAHERISARSISRLRENES) shows a compositional bias: basic and acidic residues. The segment covering 779-799 (SPVSTKSASPKKPALKSSSKT) has biased composition (low complexity). The span at 815 to 828 (LSSTPPRAQASTEV) shows a compositional bias: polar residues. Composition is skewed to low complexity over residues 854–864 (VDSLSASDSAS) and 947–961 (SSGSRNGSSKSPQSK). One can recognise a DEP domain in the interval 1321–1396 (GEKGVRMMDR…DGNYFYQISS (76 aa)). 2 disordered regions span residues 1406–1460 (RGSW…KNKA) and 1797–1824 (SEIRRSRDDSNMSRGSPRSGSLRPLSLT). Residues 1444 to 1460 (DTQSQTPSTPSKLKNKA) are compositionally biased toward polar residues. A compositionally biased stretch (basic and acidic residues) spans 1798–1807 (EIRRSRDDSN). Residues 1809-1824 (SRGSPRSGSLRPLSLT) show a composition bias toward low complexity.

The protein belongs to the IML1 family.

The protein resides in the vacuole membrane. The polypeptide is Vacuolar membrane-associated protein iml1 (iml1) (Aspergillus oryzae (strain ATCC 42149 / RIB 40) (Yellow koji mold)).